The sequence spans 108 residues: Cytochrome c6 (108 aa).

Positions 1–23 (MRLLFAFFIICHIFTNNVQLTFA) are cleaved as a signal peptide. The heme c site is built by Cys37, Cys40, His41, and Met81.

This sequence belongs to the cytochrome c family. PetJ subfamily. As to quaternary structure, monomer. Post-translationally, binds 1 heme c group covalently per subunit.

It is found in the plastid. It localises to the chloroplast thylakoid lumen. Its function is as follows. Functions as an electron carrier between membrane-bound cytochrome b6-f and photosystem I in oxygenic photosynthesis. This is Cytochrome c6 from Gracilaria tenuistipitata var. liui (Red alga).